Here is a 592-residue protein sequence, read N- to C-terminus: Probable auxin efflux carrier component 1c (592 aa).

At 1-6 (MITGAD) the chain is on the extracellular side. A helical membrane pass occupies residues 7-27 (FYHVMTAMVPLYVAMILAYGS). The Cytoplasmic portion of the chain corresponds to 28–38 (VKWWRIFTPDQ). A helical membrane pass occupies residues 39-59 (CSGINRFVALFAVPLLSFHFI). V51 contacts (indol-3-yl)acetate. The Extracellular segment spans residues 60–70 (STNNPYTMNLR). The helical transmembrane segment at 71–91 (FIAADTLQKLIVLALLTLWSH) threads the bilayer. Topologically, residues 92–100 (LSRRGSLEW) are cytoplasmic. Residues 101–121 (TITLFSLSTLPNTLVMGIPLL) traverse the membrane as a helical segment. N112 and L114 together coordinate (indol-3-yl)acetate. Residues 122-131 (KGMYGEFSGS) are Extracellular-facing. Residues 132–152 (LMVQIVVLQCIIWYTLMLFMF) traverse the membrane as a helical segment. Y145 is a (indol-3-yl)acetate binding site. Residues 153-452 (EYRGARILIT…LIRNPNTYSS (300 aa)) are Cytoplasmic-facing. Disordered regions lie at residues 214-236 (RSDV…SNLT) and 282-331 (GATP…AKGE). A compositionally biased stretch (polar residues) spans 224–236 (GFSSTTPRPSNLT). Pro residues predominate over residues 309–318 (APNPAMAAPP). A helical membrane pass occupies residues 453–473 (LIGLIWSLVCFRWNFEMPAII). At 474–476 (LKS) the chain is on the extracellular side. Residues 477–497 (ISILSDAGLGMAMFSLGLFMA) form a helical membrane-spanning segment. At 498 to 511 (LQPRIIACGNKVAT) the chain is on the cytoplasmic side. The helical transmembrane segment at 512–532 (FAMAVRFLTGPAVMAAASIAV) threads the bilayer. Residues 533 to 537 (GLRGT) lie on the Extracellular side of the membrane. Residues 538 to 558 (LLHVAIVQAALPQGIVPFVFA) form a helical membrane-spanning segment. I552 and V553 together coordinate (indol-3-yl)acetate. Over 559 to 571 (KEYSVHPDILSTA) the chain is Cytoplasmic. Residues 572 to 592 (VIFGMLIALPITLVYYILLGL) form a helical membrane-spanning segment.

The protein belongs to the auxin efflux carrier (TC 2.A.69.1) family. Homodimer. Expressed at low levels in roots and leaves. Expressed in roots, stem bases, stems, leaves and young panicles.

The protein localises to the membrane. Its function is as follows. May act as a component of the auxin efflux carrier. This chain is Probable auxin efflux carrier component 1c, found in Oryza sativa subsp. japonica (Rice).